The primary structure comprises 141 residues: MYKHVLVAVDLSDESQFLLEKAAGVARRNEAKLSIIHVDVNFSDLYTGLIDVNMASMQDRISTETQQSLVQLAENSSYPVAEKLSGSGDLGQVLADAIEKYDVDLLVTGHHQDFWSKLMSSTRQVMNNIAVDMLVVPLRDE.

The protein belongs to the universal stress protein A family. Homodimer.

The protein localises to the cytoplasm. In terms of biological role, required for resistance to DNA-damaging agents. In Pasteurella multocida (strain Pm70), this protein is Universal stress protein A homolog (uspA).